Reading from the N-terminus, the 297-residue chain is Nitrogenase iron protein (297 aa).

11–18 contacts ATP; that stretch reads GKGGIGKS. A [4Fe-4S] cluster-binding site is contributed by cysteine 99. At arginine 102 the chain carries ADP-ribosylarginine; by dinitrogenase reductase ADP-ribosyltransferase. Residue cysteine 133 participates in [4Fe-4S] cluster binding.

Belongs to the NifH/BchL/ChlL family. In terms of assembly, homodimer. It depends on [4Fe-4S] cluster as a cofactor. In terms of processing, the reversible ADP-ribosylation of Arg-102 inactivates the nitrogenase reductase and regulates nitrogenase activity.

It carries out the reaction N2 + 8 reduced [2Fe-2S]-[ferredoxin] + 16 ATP + 16 H2O = H2 + 8 oxidized [2Fe-2S]-[ferredoxin] + 2 NH4(+) + 16 ADP + 16 phosphate + 6 H(+). Its function is as follows. The key enzymatic reactions in nitrogen fixation are catalyzed by the nitrogenase complex, which has 2 components: the iron protein and the molybdenum-iron protein. This Rhizobium meliloti (strain 1021) (Ensifer meliloti) protein is Nitrogenase iron protein (nifH).